Consider the following 312-residue polypeptide: Porphobilinogen deaminase (312 aa).

An S-(dipyrrolylmethanemethyl)cysteine modification is found at cysteine 243.

The protein belongs to the HMBS family. Monomer. Requires dipyrromethane as cofactor.

The catalysed reaction is 4 porphobilinogen + H2O = hydroxymethylbilane + 4 NH4(+). Its pathway is porphyrin-containing compound metabolism; protoporphyrin-IX biosynthesis; coproporphyrinogen-III from 5-aminolevulinate: step 2/4. Its function is as follows. Tetrapolymerization of the monopyrrole PBG into the hydroxymethylbilane pre-uroporphyrinogen in several discrete steps. The protein is Porphobilinogen deaminase of Vibrio parahaemolyticus serotype O3:K6 (strain RIMD 2210633).